Consider the following 322-residue polypeptide: MFKIRKRSVPKETLKGILRKSPSKTSKVSQKVGFVDDHGKPIAEYRDFPADEGDEASSSDSHYEKKAPLVINRSGDYQINRMKWVVYSVKNVKKQNDEPSEMRIMEENRLTENNISRAPLFGTFDALDSPNLTTDAIIRARTPVPIITSGSSPDIPQCVSPVQNTYQQIFENNTDTSDEVQDFSIPPPPYPSSFPAPTTPLLALMSQLKQRGIISGEQNNQPLDNVNPMPQQFDRRPSRWTQGSWKVDRICTYYINRPDKCTRGDNCRFKHDDVEREHRQKEIQSSRNQSWHHRTSSHKYSSENSDHRGYRRHRSRSPHARQ.

The interval 1–63 is disordered; that stretch reads MFKIRKRSVP…DEASSSDSHY (63 aa). A compositionally biased stretch (basic and acidic residues) spans 34–49; sequence FVDDHGKPIAEYRDFP. The segment at 245-274 adopts a C3H1-type zinc-finger fold; the sequence is WKVDRICTYYINRPDKCTRGDNCRFKHDDV. The segment at 278–322 is disordered; it reads HRQKEIQSSRNQSWHHRTSSHKYSSENSDHRGYRRHRSRSPHARQ. The span at 309-322 shows a compositional bias: basic residues; that stretch reads GYRRHRSRSPHARQ.

This is an uncharacterized protein from Caenorhabditis elegans.